The following is a 743-amino-acid chain: TSL-kinase interacting protein 1 (743 aa).

The SANT domain occupies R53–N104. 2 disordered regions span residues S486–W523 and S626–G679. Residues V488–Y499 show a composition bias toward basic and acidic residues.

As to quaternary structure, interacts only with active kinase forms of TOUSLED. Interacts with SNL1. In terms of processing, phosphorylated in vitro by TOUSLED. In terms of tissue distribution, expressed in flowers, roots and leaves.

It localises to the nucleus. The chain is TSL-kinase interacting protein 1 (TKI1) from Arabidopsis thaliana (Mouse-ear cress).